The following is a 323-amino-acid chain: Mycothiol acetyltransferase (323 aa).

Glutamate 44 contributes to the 1D-myo-inositol 2-(L-cysteinylamino)-2-deoxy-alpha-D-glucopyranoside binding site. An acetyl-CoA-binding site is contributed by 98–100; sequence LAV. Residues 173-323 form the N-acetyltransferase domain; that stretch reads VSLRAFIPGQ…DVMYGPKNGG (151 aa). Residues glutamate 200, lysine 240, and glutamate 253 each coordinate 1D-myo-inositol 2-(L-cysteinylamino)-2-deoxy-alpha-D-glucopyranoside. Residues 257–259 and 264–270 contribute to the acetyl-CoA site; these read VGV and QGMGLGK. Tyrosine 291 contacts 1D-myo-inositol 2-(L-cysteinylamino)-2-deoxy-alpha-D-glucopyranoside.

The protein belongs to the acetyltransferase family. MshD subfamily. In terms of assembly, monomer.

It catalyses the reaction 1D-myo-inositol 2-(L-cysteinylamino)-2-deoxy-alpha-D-glucopyranoside + acetyl-CoA = mycothiol + CoA + H(+). Its function is as follows. Catalyzes the transfer of acetyl from acetyl-CoA to desacetylmycothiol (Cys-GlcN-Ins) to form mycothiol. This Arthrobacter sp. (strain FB24) protein is Mycothiol acetyltransferase.